We begin with the raw amino-acid sequence, 309 residues long: 2-dehydropantoate 2-reductase (309 aa).

NADP(+) is bound by residues 7 to 12 (GAGSIG), Arg-31, and Lys-74. CoA-binding positions include 8–10 (AGS), Arg-31, Lys-74, and Cys-84. Residues Asn-100 and Ala-124 each contribute to the NADP(+) site. Lys-180 acts as the Proton donor in catalysis. Substrate contacts are provided by residues Lys-180, Asn-184, Asn-188, Asn-198, and 247-250 (NYNS). Arg-257 contributes to the CoA binding site. Glu-262 lines the NADP(+) pocket.

It belongs to the ketopantoate reductase family. As to quaternary structure, homodimer.

The protein resides in the cytoplasm. It catalyses the reaction (R)-pantoate + NAD(+) = 2-dehydropantoate + NADH + H(+). The enzyme catalyses (R)-pantoate + NADP(+) = 2-dehydropantoate + NADPH + H(+). Its pathway is cofactor biosynthesis; coenzyme A biosynthesis. Its activity is regulated as follows. Regulated by feedback inhibition by coenzyme A (CoA). CoA acts by competing with NAD(P)H. A disulfide bond is formed between CoA and Cys-84, which indicates an irreversible inhibition upon binding of CoA. Catalyzes the NAD(P)H-dependent reduction of ketopantoate into pantoic acid. Prefers NADH rather than NADPH as the electron donor. The chain is 2-dehydropantoate 2-reductase from Thermococcus kodakarensis (strain ATCC BAA-918 / JCM 12380 / KOD1) (Pyrococcus kodakaraensis (strain KOD1)).